A 32-amino-acid chain; its full sequence is Fibrinolytic enzyme 2 (32 aa).

The Peptidase S8 domain maps to 1 to 32 (ISGTSMSCPHVAGRAYVLDTSLRVYLLDTGLR). Catalysis depends on Ser-5, which acts as the Charge relay system.

This sequence belongs to the peptidase S8 family.

With respect to regulation, inhibited by PMSF. Not inhibited by benzamidine, aprotinin, SBTI, EDTA, EGTA, 2-mercaptoethanol, iodoacetic acid or pepstatin A. In terms of biological role, serine protease. Has fibrinolytic and fibrinogenolytic but no plasminogenolytic activity. Cleaves after Arg and Lys residues. Cleaves fibrinogen alpha chain, beta chain and gamma chain in that order. This is Fibrinolytic enzyme 2 from Hediste japonica (Polychaete worm).